Reading from the N-terminus, the 60-residue chain is Large ribosomal subunit protein uL30 (60 aa).

It belongs to the universal ribosomal protein uL30 family. Part of the 50S ribosomal subunit.

This Streptococcus gordonii (strain Challis / ATCC 35105 / BCRC 15272 / CH1 / DL1 / V288) protein is Large ribosomal subunit protein uL30.